The primary structure comprises 57 residues: uncharacterized protein (57 aa).

Positions 31–57 are disordered; that stretch reads HHQTSSFNPMPSEVSLHTSHNFPHTTF. Polar residues predominate over residues 33-57; that stretch reads QTSSFNPMPSEVSLHTSHNFPHTTF.

This is an uncharacterized protein from Invertebrate iridescent virus 6 (IIV-6).